The following is a 465-amino-acid chain: Protein unc-93 homolog A (465 aa).

The next 5 membrane-spanning stretches (helical) occupy residues 8 to 28 (VLVVSFGFLLLFTAYGGLQSL), 40 to 60 (VISLSVIYAAIILSSMFLPPI), 71 to 91 (IVVSMGCYVAYSFGNLAPGWA), 96 to 118 (TSAILGMGGSPLWSAKCTYLTIS), and 140 to 160 (IFFFIFQSSGVWGNLMSSLIF). N-linked (GlcNAc...) asparagine glycans are attached at residues asparagine 183 and asparagine 189. A helical membrane pass occupies residues 200 to 220 (TLLGCYIGVGLLAIIFVAVFL). The N-linked (GlcNAc...) asparagine glycan is linked to asparagine 237. Helical transmembrane passes span 256–276 (LLLLIPLTMYSGFEQSFLSGE), 281–301 (YVTCALGIHNVGFVMICFAAS), 319–339 (IALFCLAAAINLGSFLGLLYW), 343–363 (PDQLAIFFVFPALWGMADAVW), and 410–427 (IYIALAVLALTMVTYLYV).

It belongs to the unc-93 family.

The protein resides in the membrane. The chain is Protein unc-93 homolog A (unc93a) from Danio rerio (Zebrafish).